The following is a 144-amino-acid chain: Peptide methionine sulfoxide reductase MsrB (144 aa).

The MsrB domain maps to 5 to 128 (QEELRQRIGH…NSAALDFIPY (124 aa)). The Nucleophile role is filled by Cys117.

Belongs to the MsrB Met sulfoxide reductase family.

The catalysed reaction is L-methionyl-[protein] + [thioredoxin]-disulfide + H2O = L-methionyl-(R)-S-oxide-[protein] + [thioredoxin]-dithiol. The protein is Peptide methionine sulfoxide reductase MsrB of Streptococcus agalactiae serotype Ia (strain ATCC 27591 / A909 / CDC SS700).